Here is a 186-residue protein sequence, read N- to C-terminus: Protein GrpE (186 aa).

Residues 1 to 17 show a composition bias toward basic and acidic residues; sequence MKDEHNQEHDLSQKELE. The tract at residues 1 to 32 is disordered; it reads MKDEHNQEHDLSQKELESCENSCTCEGKKQEA.

The protein belongs to the GrpE family. Homodimer.

The protein resides in the cytoplasm. Its function is as follows. Participates actively in the response to hyperosmotic and heat shock by preventing the aggregation of stress-denatured proteins, in association with DnaK and GrpE. It is the nucleotide exchange factor for DnaK and may function as a thermosensor. Unfolded proteins bind initially to DnaJ; upon interaction with the DnaJ-bound protein, DnaK hydrolyzes its bound ATP, resulting in the formation of a stable complex. GrpE releases ADP from DnaK; ATP binding to DnaK triggers the release of the substrate protein, thus completing the reaction cycle. Several rounds of ATP-dependent interactions between DnaJ, DnaK and GrpE are required for fully efficient folding. In Helicobacter acinonychis (strain Sheeba), this protein is Protein GrpE.